The sequence spans 273 residues: Rhamnulose-1-phosphate aldolase (273 aa).

Residue glutamate 117 is part of the active site. Zn(2+) is bound by residues histidine 140, histidine 142, and histidine 211.

Belongs to the aldolase class II family. RhaD subfamily. Zn(2+) serves as cofactor.

It localises to the cytoplasm. The enzyme catalyses L-rhamnulose 1-phosphate = (S)-lactaldehyde + dihydroxyacetone phosphate. The protein operates within carbohydrate degradation; L-rhamnose degradation; glycerone phosphate from L-rhamnose: step 3/3. In terms of biological role, catalyzes the reversible cleavage of L-rhamnulose-1-phosphate to dihydroxyacetone phosphate (DHAP) and L-lactaldehyde. The sequence is that of Rhamnulose-1-phosphate aldolase from Listeria monocytogenes serotype 4a (strain HCC23).